The primary structure comprises 85 residues: Serine protease inhibitor Cvsi-2 (85 aa).

Residues 1-18 (MKVAVVVALLCFVCYTAA) form the signal peptide.

Post-translationally, contains 6 disulfide bonds. Detected in hemolymph (at protein level). Within the digestive gland expression is limited to the basophil cells of the digestive diverticula.

It is found in the secreted. In terms of biological role, slow-binding inhibitor of serine proteases. The inhibitor rapidly binds to the protease forming a weak enzyme-inhibitor complex, and this is followed by a slow isomerization forming a tight-binding enzyme-inhibitor complex. Active against subtilisin A with a dissociation constant of 0.18 nM. Active against perkinsin. Not active against thermolysin, papain or pepsin. The polypeptide is Serine protease inhibitor Cvsi-2 (Crassostrea virginica (Eastern oyster)).